The primary structure comprises 101 residues: Urinary protein 3 (101 aa).

A signal peptide spans Met1 to Ala21. The UPAR/Ly6 domain occupies Leu22–Val99. 5 disulfides stabilise this stretch: Cys24–Cys51, Cys27–Cys36, Cys43–Cys70, Cys73–Cys89, and Cys90–Cys96.

Its subcellular location is the secreted. The chain is Urinary protein 3 from Rattus norvegicus (Rat).